Reading from the N-terminus, the 190-residue chain is Histone-arginine methyltransferase METTL23 (190 aa).

This sequence belongs to the methyltransferase superfamily. METTL23 family. Interacts with HSPA5, HSP90B1, TUBULIN, UGGT1 and UGGT2. Interacts with TET3. Interacts with STPG4.

It localises to the nucleus. It is found in the cytoplasm. It carries out the reaction L-arginyl-[protein] + 2 S-adenosyl-L-methionine = N(omega),N(omega)-dimethyl-L-arginyl-[protein] + 2 S-adenosyl-L-homocysteine + 2 H(+). Histone methyltransferase that dimethylates histone H3 at 'Arg-17', forming asymmetric dimethylarginine (H3R17me2a), leading to activate transcription via chromatin remodeling. Maternal factor involved in epigenetic chromatin reprogramming of the paternal genome in the zygote: mediates H3R17me2a, promoting histone H3.3 incorporation in the male pronucleus, leading to TET3 recruitment and subsequent DNA demethylation. This is Histone-arginine methyltransferase METTL23 from Homo sapiens (Human).